Reading from the N-terminus, the 120-residue chain is NAD(P)H-quinone oxidoreductase subunit 3 (120 aa).

A run of 3 helical transmembrane segments spans residues 2–22 (FVLS…LVPI), 64–84 (MFAL…PWAV), and 89–109 (LGLL…IALV).

Belongs to the complex I subunit 3 family. NDH-1 can be composed of about 15 different subunits; different subcomplexes with different compositions have been identified which probably have different functions.

The protein resides in the cellular thylakoid membrane. It catalyses the reaction a plastoquinone + NADH + (n+1) H(+)(in) = a plastoquinol + NAD(+) + n H(+)(out). The catalysed reaction is a plastoquinone + NADPH + (n+1) H(+)(in) = a plastoquinol + NADP(+) + n H(+)(out). NDH-1 shuttles electrons from an unknown electron donor, via FMN and iron-sulfur (Fe-S) centers, to quinones in the respiratory and/or the photosynthetic chain. The immediate electron acceptor for the enzyme in this species is believed to be plastoquinone. Couples the redox reaction to proton translocation, and thus conserves the redox energy in a proton gradient. Cyanobacterial NDH-1 also plays a role in inorganic carbon-concentration. The chain is NAD(P)H-quinone oxidoreductase subunit 3 from Picosynechococcus sp. (strain ATCC 27264 / PCC 7002 / PR-6) (Agmenellum quadruplicatum).